We begin with the raw amino-acid sequence, 288 residues long: Proteasome subunit beta (288 aa).

The propeptide at 1-57 (MTVDGQVGRWPVSAIPAAYMRPGSGSFTEFLAGAEPHLLPGRAGAQPAGAAPAVPHG) is removed in mature form; by autocatalysis. The active-site Nucleophile is Thr-58.

It belongs to the peptidase T1B family. The 20S proteasome core is composed of 14 alpha and 14 beta subunits that assemble into four stacked heptameric rings, resulting in a barrel-shaped structure. The two inner rings, each composed of seven catalytic beta subunits, are sandwiched by two outer rings, each composed of seven alpha subunits. The catalytic chamber with the active sites is on the inside of the barrel. Has a gated structure, the ends of the cylinder being occluded by the N-termini of the alpha-subunits. Is capped by the proteasome-associated ATPase, ARC.

The protein resides in the cytoplasm. It catalyses the reaction Cleavage of peptide bonds with very broad specificity.. The protein operates within protein degradation; proteasomal Pup-dependent pathway. The formation of the proteasomal ATPase ARC-20S proteasome complex, likely via the docking of the C-termini of ARC into the intersubunit pockets in the alpha-rings, may trigger opening of the gate for substrate entry. Interconversion between the open-gate and close-gate conformations leads to a dynamic regulation of the 20S proteasome proteolysis activity. Its function is as follows. Component of the proteasome core, a large protease complex with broad specificity involved in protein degradation. This chain is Proteasome subunit beta, found in Nakamurella multipartita (strain ATCC 700099 / DSM 44233 / CIP 104796 / JCM 9543 / NBRC 105858 / Y-104) (Microsphaera multipartita).